Reading from the N-terminus, the 252-residue chain is Imidazole glycerol phosphate synthase subunit HisF (252 aa).

Catalysis depends on residues D11 and D130.

The protein belongs to the HisA/HisF family. In terms of assembly, heterodimer of HisH and HisF.

It localises to the cytoplasm. The catalysed reaction is 5-[(5-phospho-1-deoxy-D-ribulos-1-ylimino)methylamino]-1-(5-phospho-beta-D-ribosyl)imidazole-4-carboxamide + L-glutamine = D-erythro-1-(imidazol-4-yl)glycerol 3-phosphate + 5-amino-1-(5-phospho-beta-D-ribosyl)imidazole-4-carboxamide + L-glutamate + H(+). It functions in the pathway amino-acid biosynthesis; L-histidine biosynthesis; L-histidine from 5-phospho-alpha-D-ribose 1-diphosphate: step 5/9. Functionally, IGPS catalyzes the conversion of PRFAR and glutamine to IGP, AICAR and glutamate. The HisF subunit catalyzes the cyclization activity that produces IGP and AICAR from PRFAR using the ammonia provided by the HisH subunit. The sequence is that of Imidazole glycerol phosphate synthase subunit HisF from Bacillus cereus (strain ATCC 10987 / NRS 248).